A 954-amino-acid chain; its full sequence is Glycine dehydrogenase (decarboxylating) (954 aa).

Lys704 carries the N6-(pyridoxal phosphate)lysine modification.

This sequence belongs to the GcvP family. In terms of assembly, the glycine cleavage system is composed of four proteins: P, T, L and H. The cofactor is pyridoxal 5'-phosphate.

It carries out the reaction N(6)-[(R)-lipoyl]-L-lysyl-[glycine-cleavage complex H protein] + glycine + H(+) = N(6)-[(R)-S(8)-aminomethyldihydrolipoyl]-L-lysyl-[glycine-cleavage complex H protein] + CO2. In terms of biological role, the glycine cleavage system catalyzes the degradation of glycine. The P protein binds the alpha-amino group of glycine through its pyridoxal phosphate cofactor; CO(2) is released and the remaining methylamine moiety is then transferred to the lipoamide cofactor of the H protein. In Vibrio vulnificus (strain YJ016), this protein is Glycine dehydrogenase (decarboxylating).